A 235-amino-acid chain; its full sequence is Phosphoribosylaminoimidazole-succinocarboxamide synthase (235 aa).

This sequence belongs to the SAICAR synthetase family.

It catalyses the reaction 5-amino-1-(5-phospho-D-ribosyl)imidazole-4-carboxylate + L-aspartate + ATP = (2S)-2-[5-amino-1-(5-phospho-beta-D-ribosyl)imidazole-4-carboxamido]succinate + ADP + phosphate + 2 H(+). Its pathway is purine metabolism; IMP biosynthesis via de novo pathway; 5-amino-1-(5-phospho-D-ribosyl)imidazole-4-carboxamide from 5-amino-1-(5-phospho-D-ribosyl)imidazole-4-carboxylate: step 1/2. This is Phosphoribosylaminoimidazole-succinocarboxamide synthase from Chloroherpeton thalassium (strain ATCC 35110 / GB-78).